Reading from the N-terminus, the 472-residue chain is Ras-GEF domain-containing family member 1B (472 aa).

The N-terminal Ras-GEF domain maps to 34–164 (HDNNLLSGSL…MIQCLIRKLA (131 aa)). The Ras-GEF domain maps to 204–452 (DPYTLAQQLT…YLASYESEGP (249 aa)).

In terms of assembly, interacts with CCDC124 during cytokinesis. Interacts with Ras family proteins.

It localises to the early endosome. Its subcellular location is the late endosome. The protein resides in the midbody. Functionally, guanine nucleotide exchange factor (GEF) with specificity for RAP2A, it doesn't seems to activate other Ras family proteins (in vitro). The protein is Ras-GEF domain-containing family member 1B (RASGEF1B) of Bos taurus (Bovine).